We begin with the raw amino-acid sequence, 82 residues long: ATP synthase subunit c, chloroplastic (82 aa).

A run of 2 helical transmembrane segments spans residues 3 to 23 (PIISAASVIAAGLAVGLAAIG) and 57 to 77 (LAFMESLTIYGLVVALSLLFA).

It belongs to the ATPase C chain family. As to quaternary structure, F-type ATPases have 2 components, F(1) - the catalytic core - and F(0) - the membrane proton channel. F(1) has five subunits: alpha(3), beta(3), gamma(1), delta(1), epsilon(1). F(0) has four main subunits: a(1), b(1), b'(1) and c(10-14). The alpha and beta chains form an alternating ring which encloses part of the gamma chain. F(1) is attached to F(0) by a central stalk formed by the gamma and epsilon chains, while a peripheral stalk is formed by the delta, b and b' chains.

The protein resides in the plastid. Its subcellular location is the chloroplast thylakoid membrane. In terms of biological role, f(1)F(0) ATP synthase produces ATP from ADP in the presence of a proton or sodium gradient. F-type ATPases consist of two structural domains, F(1) containing the extramembraneous catalytic core and F(0) containing the membrane proton channel, linked together by a central stalk and a peripheral stalk. During catalysis, ATP synthesis in the catalytic domain of F(1) is coupled via a rotary mechanism of the central stalk subunits to proton translocation. Functionally, key component of the F(0) channel; it plays a direct role in translocation across the membrane. A homomeric c-ring of between 10-14 subunits forms the central stalk rotor element with the F(1) delta and epsilon subunits. In Cyanidium caldarium (Red alga), this protein is ATP synthase subunit c, chloroplastic.